Consider the following 692-residue polypeptide: Elongation factor G (692 aa).

Residues 8-282 enclose the tr-type G domain; it reads ENTRNIGIMA…AVIDYLPSPV (275 aa). GTP contacts are provided by residues 17–24, 81–85, and 135–138; these read AHIDAGKT, DTPGH, and NKMD.

Belongs to the TRAFAC class translation factor GTPase superfamily. Classic translation factor GTPase family. EF-G/EF-2 subfamily.

The protein resides in the cytoplasm. Its function is as follows. Catalyzes the GTP-dependent ribosomal translocation step during translation elongation. During this step, the ribosome changes from the pre-translocational (PRE) to the post-translocational (POST) state as the newly formed A-site-bound peptidyl-tRNA and P-site-bound deacylated tRNA move to the P and E sites, respectively. Catalyzes the coordinated movement of the two tRNA molecules, the mRNA and conformational changes in the ribosome. This is Elongation factor G from Lysinibacillus sphaericus (strain C3-41).